The primary structure comprises 482 residues: tRNA sulfurtransferase (482 aa).

One can recognise a THUMP domain in the interval 61-165; sequence DVTLAVLTQT…NDKLNLIIAR (105 aa). ATP is bound by residues 183–184, Lys-265, Gly-287, and Gln-296; that span reads LI. Cysteines 344 and 456 form a disulfide. One can recognise a Rhodanese domain in the interval 404–482; that stretch reads LGSDVVVLDI…GYKNVKVYRP (79 aa). Cys-456 serves as the catalytic Cysteine persulfide intermediate.

This sequence belongs to the ThiI family.

The protein localises to the cytoplasm. The enzyme catalyses [ThiI sulfur-carrier protein]-S-sulfanyl-L-cysteine + a uridine in tRNA + 2 reduced [2Fe-2S]-[ferredoxin] + ATP + H(+) = [ThiI sulfur-carrier protein]-L-cysteine + a 4-thiouridine in tRNA + 2 oxidized [2Fe-2S]-[ferredoxin] + AMP + diphosphate. The catalysed reaction is [ThiS sulfur-carrier protein]-C-terminal Gly-Gly-AMP + S-sulfanyl-L-cysteinyl-[cysteine desulfurase] + AH2 = [ThiS sulfur-carrier protein]-C-terminal-Gly-aminoethanethioate + L-cysteinyl-[cysteine desulfurase] + A + AMP + 2 H(+). It functions in the pathway cofactor biosynthesis; thiamine diphosphate biosynthesis. Functionally, catalyzes the ATP-dependent transfer of a sulfur to tRNA to produce 4-thiouridine in position 8 of tRNAs, which functions as a near-UV photosensor. Also catalyzes the transfer of sulfur to the sulfur carrier protein ThiS, forming ThiS-thiocarboxylate. This is a step in the synthesis of thiazole, in the thiamine biosynthesis pathway. The sulfur is donated as persulfide by IscS. This Aliivibrio fischeri (strain ATCC 700601 / ES114) (Vibrio fischeri) protein is tRNA sulfurtransferase.